A 630-amino-acid polypeptide reads, in one-letter code: Arginine--tRNA ligase (630 aa).

A 'HIGH' region motif is present at residues 120–130 (ANPVHPLHIGH).

The protein belongs to the class-I aminoacyl-tRNA synthetase family.

The protein localises to the cytoplasm. It carries out the reaction tRNA(Arg) + L-arginine + ATP = L-arginyl-tRNA(Arg) + AMP + diphosphate. This chain is Arginine--tRNA ligase, found in Pyrobaculum aerophilum (strain ATCC 51768 / DSM 7523 / JCM 9630 / CIP 104966 / NBRC 100827 / IM2).